Consider the following 514-residue polypeptide: ATP synthase subunit alpha (514 aa).

170–177 (GDRQTGKT) serves as a coordination point for ATP.

This sequence belongs to the ATPase alpha/beta chains family. As to quaternary structure, F-type ATPases have 2 components, CF(1) - the catalytic core - and CF(0) - the membrane proton channel. CF(1) has five subunits: alpha(3), beta(3), gamma(1), delta(1), epsilon(1). CF(0) has three main subunits: a(1), b(2) and c(9-12). The alpha and beta chains form an alternating ring which encloses part of the gamma chain. CF(1) is attached to CF(0) by a central stalk formed by the gamma and epsilon chains, while a peripheral stalk is formed by the delta and b chains.

It is found in the cell inner membrane. It catalyses the reaction ATP + H2O + 4 H(+)(in) = ADP + phosphate + 5 H(+)(out). In terms of biological role, produces ATP from ADP in the presence of a proton gradient across the membrane. The alpha chain is a regulatory subunit. This is ATP synthase subunit alpha from Psychrobacter sp. (strain PRwf-1).